A 191-amino-acid chain; its full sequence is Fe/S biogenesis protein NfuA (191 aa).

Positions 149 and 152 each coordinate [4Fe-4S] cluster.

It belongs to the NfuA family. In terms of assembly, homodimer. It depends on [4Fe-4S] cluster as a cofactor.

Functionally, involved in iron-sulfur cluster biogenesis. Binds a 4Fe-4S cluster, can transfer this cluster to apoproteins, and thereby intervenes in the maturation of Fe/S proteins. Could also act as a scaffold/chaperone for damaged Fe/S proteins. This chain is Fe/S biogenesis protein NfuA, found in Serratia proteamaculans (strain 568).